The following is a 691-amino-acid chain: Elongation factor G (691 aa).

One can recognise a tr-type G domain in the interval 8–282; it reads ERVRNIGIAA…AVVDYLPAPV (275 aa). GTP-binding positions include 17–24, 81–85, and 135–138; these read AHIDAGKT, DTPGH, and NKMD.

This sequence belongs to the TRAFAC class translation factor GTPase superfamily. Classic translation factor GTPase family. EF-G/EF-2 subfamily.

Its subcellular location is the cytoplasm. Functionally, catalyzes the GTP-dependent ribosomal translocation step during translation elongation. During this step, the ribosome changes from the pre-translocational (PRE) to the post-translocational (POST) state as the newly formed A-site-bound peptidyl-tRNA and P-site-bound deacylated tRNA move to the P and E sites, respectively. Catalyzes the coordinated movement of the two tRNA molecules, the mRNA and conformational changes in the ribosome. This chain is Elongation factor G, found in Prochlorococcus marinus (strain MIT 9211).